Here is a 469-residue protein sequence, read N- to C-terminus: Chromosomal replication initiator protein DnaA (469 aa).

Positions 1-71 (MKEFWQTCVS…EALAAEWYQR (71 aa)) are domain I, interacts with DnaA modulators. The segment at 71-131 (RPVQVTFELP…DAANIVYERS (61 aa)) is domain II. A domain III, AAA+ region region spans residues 132 to 348 (RLNTDLTFEN…GALRKVLAYA (217 aa)). Residues glycine 176, glycine 178, lysine 179, and threonine 180 each coordinate ATP. A domain IV, binds dsDNA region spans residues 349–469 (RFHGRDVLTV…LHVLEQTLKG (121 aa)).

Belongs to the DnaA family. As to quaternary structure, oligomerizes as a right-handed, spiral filament on DNA at oriC.

The protein localises to the cytoplasm. In terms of biological role, plays an essential role in the initiation and regulation of chromosomal replication. ATP-DnaA binds to the origin of replication (oriC) to initiate formation of the DNA replication initiation complex once per cell cycle. Binds the DnaA box (a 9 base pair repeat at the origin) and separates the double-stranded (ds)DNA. Forms a right-handed helical filament on oriC DNA; dsDNA binds to the exterior of the filament while single-stranded (ss)DNA is stabiized in the filament's interior. The ATP-DnaA-oriC complex binds and stabilizes one strand of the AT-rich DNA unwinding element (DUE), permitting loading of DNA polymerase. After initiation quickly degrades to an ADP-DnaA complex that is not apt for DNA replication. Binds acidic phospholipids. The protein is Chromosomal replication initiator protein DnaA of Bordetella parapertussis (strain 12822 / ATCC BAA-587 / NCTC 13253).